The sequence spans 117 residues: Photosystem II reaction center Psb28 protein (117 aa).

This sequence belongs to the Psb28 family. As to quaternary structure, part of the photosystem II complex.

It localises to the cellular thylakoid membrane. The sequence is that of Photosystem II reaction center Psb28 protein from Prochlorococcus marinus (strain MIT 9301).